A 211-amino-acid chain; its full sequence is NADH-quinone oxidoreductase subunit I (211 aa).

4Fe-4S ferredoxin-type domains lie at 90–119 (RLWE…IDTK) and 129–158 (TEYS…HGGE). [4Fe-4S] cluster-binding residues include cysteine 99, cysteine 102, cysteine 105, cysteine 109, cysteine 138, cysteine 141, cysteine 144, and cysteine 148.

Belongs to the complex I 23 kDa subunit family. In terms of assembly, NDH-1 is composed of 14 different subunits. Subunits NuoA, H, J, K, L, M, N constitute the membrane sector of the complex. [4Fe-4S] cluster is required as a cofactor.

It localises to the cell inner membrane. It carries out the reaction a quinone + NADH + 5 H(+)(in) = a quinol + NAD(+) + 4 H(+)(out). In terms of biological role, NDH-1 shuttles electrons from NADH, via FMN and iron-sulfur (Fe-S) centers, to quinones in the respiratory chain. The immediate electron acceptor for the enzyme in this species is believed to be ubiquinone. Couples the redox reaction to proton translocation (for every two electrons transferred, four hydrogen ions are translocated across the cytoplasmic membrane), and thus conserves the redox energy in a proton gradient. This Sulfurimonas denitrificans (strain ATCC 33889 / DSM 1251) (Thiomicrospira denitrificans (strain ATCC 33889 / DSM 1251)) protein is NADH-quinone oxidoreductase subunit I.